Consider the following 214-residue polypeptide: Large ribosomal subunit protein uL2my, C-terminal part (214 aa).

Residues 1-30 (MSGLVALCRARASASSSLFNSVIRPAFRNF) constitute a mitochondrion transit peptide. The segment at 157-214 (VAMNPCDHPHGGGEGKSKSSGSRGRTSVSPWGKPCKGGYKSASVKKKKKRLAEAAAKM) is disordered. Residues 163–173 (DHPHGGGEGKS) show a composition bias toward basic and acidic residues. Positions 174-185 (KSSGSRGRTSVS) are enriched in low complexity.

Belongs to the universal ribosomal protein uL2 family. As to quaternary structure, component of the mitochondrial ribosome large subunit.

The protein localises to the mitochondrion. This Arabidopsis thaliana (Mouse-ear cress) protein is Large ribosomal subunit protein uL2my, C-terminal part.